The sequence spans 504 residues: Anaerobic nitric oxide reductase transcription regulator NorR (504 aa).

Position 57 is a 4-aspartylphosphate (Asp-57). Residues 187 to 416 (MIGLSPGMTQ…LEHAIHRAVV (230 aa)) enclose the Sigma-54 factor interaction domain. Residues 215–222 (GETGTGKE) and 278–287 (ADNGTLFLDE) each bind ATP. The H-T-H motif DNA-binding region spans 479-498 (WAACARMLETDVANLHRLAK).

It participates in nitrogen metabolism; nitric oxide reduction. In terms of biological role, required for the expression of anaerobic nitric oxide (NO) reductase, acts as a transcriptional activator for at least the norVW operon. Activation also requires sigma-54. The chain is Anaerobic nitric oxide reductase transcription regulator NorR from Escherichia coli O9:H4 (strain HS).